A 79-amino-acid polypeptide reads, in one-letter code: Small ribosomal subunit protein bS18 (79 aa).

The protein belongs to the bacterial ribosomal protein bS18 family. In terms of assembly, part of the 30S ribosomal subunit. Forms a tight heterodimer with protein bS6.

Its function is as follows. Binds as a heterodimer with protein bS6 to the central domain of the 16S rRNA, where it helps stabilize the platform of the 30S subunit. This chain is Small ribosomal subunit protein bS18, found in Streptococcus pyogenes serotype M5 (strain Manfredo).